Consider the following 219-residue polypeptide: Response regulator ArlR (219 aa).

The region spanning Q3–L116 is the Response regulatory domain. D52 carries the 4-aspartylphosphate modification. Residues K122–R219 constitute a DNA-binding region (ompR/PhoB-type).

Post-translationally, phosphorylated by ArlS.

It localises to the cytoplasm. Its function is as follows. Member of the two-component regulatory system ArlS/ArlR involved in the regulation of adhesion, autolysis, multidrug resistance and virulence. The protein is Response regulator ArlR (arlR) of Staphylococcus aureus (strain USA300).